A 258-amino-acid polypeptide reads, in one-letter code: Myelin proteolipid protein (258 aa).

Over 1 to 22 the chain is Cytoplasmic; sequence MFPVRHALLCKALGCYDCCIRC. S-palmitoyl cysteine attachment occurs at residues Cys-18, Cys-19, and Cys-22. A helical transmembrane segment spans residues 23 to 48; it reads LGAVPYPSLVSTLLCFTGMALFCGCG. Topologically, residues 49–82 are extracellular; that stretch reads HEALAHTEVLVETYFVRNIQDYVILASFIKYFQY. A helical membrane pass occupies residues 83-103; sequence VIYGLASFFFLYCILLLAEGF. Over 104–128 the chain is Cytoplasmic; the sequence is YTTSAVKQTFGEFRSTRCGRCLSLT. Residues Cys-121 and Cys-124 are each lipidated (S-palmitoyl cysteine). The chain crosses the membrane as a helical span at residues 129 to 149; it reads FIIVTYVLAVIWLAVFAFTAI. Residues 150–218 are Extracellular-facing; it reads PSSSSLIWHR…KTKEFFVTYD (69 aa). Cysteines 181 and 200 form a disulfide. The chain crosses the membrane as a helical span at residues 219-239; it reads LYIAAFAGAGIALLALFLYVV. The Cytoplasmic segment spans residues 240–258; sequence ATTYNYAVLRFLGRKGLRC.

It belongs to the myelin proteolipid protein family. In terms of tissue distribution, central nervous system. Highest levels in spinal cord and medulla oblongata.

It localises to the cell membrane. This is the major myelin protein from the central nervous system. It plays an important role in the formation or maintenance of the multilamellar structure of myelin. May be involved in neuron and glial cell differentiation. The protein is Myelin proteolipid protein (plp) of Oncorhynchus mykiss (Rainbow trout).